A 297-amino-acid polypeptide reads, in one-letter code: Large ribosomal subunit protein uL18 (297 aa).

Residue Gly-2 is modified to N-acetylglycine. Lys-5 and Lys-48 each carry N6-acetyllysine. Position 185 is a phosphoserine (Ser-185). Lys-220 is subject to N6-acetyllysine; alternate. Lys-220 is covalently cross-linked (Glycyl lysine isopeptide (Lys-Gly) (interchain with G-Cter in SUMO1); alternate). Residue Lys-220 forms a Glycyl lysine isopeptide (Lys-Gly) (interchain with G-Cter in SUMO2); alternate linkage. The residue at position 232 (Thr-232) is a Phosphothreonine. The segment at 253-297 (YEKKPKKEVKKKRWNRPKMSLAQKKDRVAQKKASFLRAQERAAES) is disordered. A compositionally biased stretch (basic residues) spans 258-268 (KKEVKKKRWNR). Position 272 is a phosphoserine (Ser-272).

It belongs to the universal ribosomal protein uL18 family. As to quaternary structure, component of the large ribosomal subunit (LSU). Part of the 5S RNP complex, which is a LSU subcomplex composed of the 5S RNA, RPL5 and RPL11. Component of a hexameric 5S RNP precursor complex, composed of 5S RNA, RRS1, RPF2/BXDC1, RPL5, RPL11 and HEATR3; this complex acts as a precursor for ribosome assembly. Interacts with NVL in an ATP-dependent manner. Interacts with RRP1B. Interacts with IPO5, IPO7 and KPNB1; these interactions may be involved in RPL5 nuclear import for the assembly of ribosomal subunits. Interacts with RRP1B.

Its subcellular location is the cytoplasm. It localises to the nucleus. The protein resides in the nucleolus. In terms of biological role, component of the ribosome, a large ribonucleoprotein complex responsible for the synthesis of proteins in the cell. The small ribosomal subunit (SSU) binds messenger RNAs (mRNAs) and translates the encoded message by selecting cognate aminoacyl-transfer RNA (tRNA) molecules. The large subunit (LSU) contains the ribosomal catalytic site termed the peptidyl transferase center (PTC), which catalyzes the formation of peptide bonds, thereby polymerizing the amino acids delivered by tRNAs into a polypeptide chain. The nascent polypeptides leave the ribosome through a tunnel in the LSU and interact with protein factors that function in enzymatic processing, targeting, and the membrane insertion of nascent chains at the exit of the ribosomal tunnel. As part of the 5S RNP/5S ribonucleoprotein particle it is an essential component of the LSU, required for its formation and the maturation of rRNAs. It also couples ribosome biogenesis to p53/TP53 activation. As part of the 5S RNP it accumulates in the nucleoplasm and inhibits MDM2, when ribosome biogenesis is perturbed, mediating the stabilization and the activation of TP53. The sequence is that of Large ribosomal subunit protein uL18 (RPL5) from Macaca fascicularis (Crab-eating macaque).